The primary structure comprises 614 residues: V-type proton ATPase catalytic subunit A (614 aa).

Position 247-254 (247-254 (GAFGCGKT)) interacts with ATP.

It belongs to the ATPase alpha/beta chains family. As to quaternary structure, V-ATPase is a heteromultimeric enzyme made up of two complexes: the ATP-hydrolytic V1 complex and the proton translocation V0 complex. The V1 complex consists of three catalytic AB heterodimers that form a heterohexamer, three peripheral stalks each consisting of EG heterodimers, one central rotor including subunits D and F, and the regulatory subunits C and H. The proton translocation complex V0 consists of the proton transport subunit a, a ring of proteolipid subunits c9c'', rotary subunit d, subunits e and f, and the accessory subunits VhaAC45 and ATP6AP2.

It carries out the reaction ATP + H2O + 4 H(+)(in) = ADP + phosphate + 5 H(+)(out). Its activity is regulated as follows. ATP hydrolysis occurs at the interface between the nucleotide-binding domains of subunits A and B. ATP hydrolysis triggers a conformational change in the subunits D and F, which induces a shift of subunit d. The c-ring is subsequently rotated and results in a continuous proton translocation across the membrane. In terms of biological role, catalytic subunit of the V1 complex of vacuolar(H+)-ATPase (V-ATPase), a multisubunit enzyme composed of a peripheral complex (V1) that hydrolyzes ATP and a membrane integral complex (V0) that translocates protons. V-ATPase is responsible for acidifying and maintaining the pH of intracellular compartments and in some cell types, is targeted to the plasma membrane, where it is responsible for acidifying the extracellular environment. This chain is V-type proton ATPase catalytic subunit A, found in Anopheles gambiae (African malaria mosquito).